The sequence spans 767 residues: Lysyl oxidase homolog 2 (767 aa).

The N-terminal stretch at 1 to 19 is a signal peptide; sequence MLVTHIFLLTLSLSVPTLG. SRCR domains are found at residues 51–152, 181–295, 319–418, and 428–537; these read VRLA…VQCS, IRAI…VSCT, VRLR…VRCN, and VRLS…VSCV. 9 disulfides stabilise this stretch: C77–C141, C90–C151, C121–C131, C211–C284, C224–C294, C258–C268, C344–C407, C357–C417, and C388–C398. N281 carries N-linked (GlcNAc...) asparagine glycosylation. An N-linked (GlcNAc...) asparagine glycan is attached at N448. Intrachain disulfides connect C457–C523, C470–C536, and C504–C514. Residues 541–744 are lysyl-oxidase like; that stretch reads PDLVLNAALV…WMYNCHIGGS (204 aa). Ca(2+)-binding residues include D542 and L543. 4 disulfides stabilise this stretch: C566–C618, C572–C688, C650–C666, and C656–C678. 3 residues coordinate Cu cation: H619, H621, and H623. N-linked (GlcNAc...) asparagine glycosylation occurs at N637. A cross-link (lysine tyrosylquinone (Lys-Tyr)) is located at residues 646-682; sequence KASFCLEDSECETDVQKQYACANFGEQGITVGCWDVY. The residue at position 682 (Y682) is a 2',4',5'-topaquinone. The Ca(2+) site is built by E715, D717, N720, and N721. An intrachain disulfide couples C725 to C739.

This sequence belongs to the lysyl oxidase family. Cu cation is required as a cofactor. The cofactor is lysine tyrosylquinone residue. In terms of processing, the lysine tyrosylquinone cross-link (LTQ) is generated by condensation of the epsilon-amino group of a lysine with a topaquinone produced by oxidation of tyrosine.

It is found in the secreted. The protein localises to the extracellular space. Its subcellular location is the extracellular matrix. The protein resides in the basement membrane. It localises to the nucleus. It is found in the chromosome. The protein localises to the endoplasmic reticulum. It catalyses the reaction L-lysyl-[protein] + O2 + H2O = (S)-2-amino-6-oxohexanoyl-[protein] + H2O2 + NH4(+). Mediates the post-translational oxidative deamination of lysine residues on target proteins leading to the formation of deaminated lysine (allysine). Acts as a transcription corepressor and specifically mediates deamination of trimethylated 'Lys-4' of histone H3 (H3K4me3), a specific tag for epigenetic transcriptional activation. Shows no activity against histone H3 when it is trimethylated on 'Lys-9' (H3K9me3) or 'Lys-27' (H3K27me3) or when 'Lys-4' is monomethylated (H3K4me1) or dimethylated (H3K4me2). Also mediates deamination of methylated TAF10, a member of the transcription factor IID (TFIID) complex, which induces release of TAF10 from promoters, leading to inhibition of TFIID-dependent transcription. LOXL2-mediated deamination of TAF10 results in transcriptional repression of genes required for embryonic stem cell pluripotency. Involved in epithelial to mesenchymal transition (EMT) and participates in repression of E-cadherin, probably by mediating deamination of histone H3. When secreted into the extracellular matrix, promotes cross-linking of extracellular matrix proteins by mediating oxidative deamination of peptidyl lysine residues in precursors to fibrous collagen and elastin. Acts as a regulator of sprouting angiogenesis, probably via collagen IV scaffolding. Acts as a regulator of chondrocyte differentiation, probably by regulating expression of factors that control chondrocyte differentiation. This Xenopus tropicalis (Western clawed frog) protein is Lysyl oxidase homolog 2 (loxl2).